Reading from the N-terminus, the 548-residue chain is Fumarate hydratase class I, anaerobic (548 aa).

C105 contributes to the [4Fe-4S] cluster binding site. K192 bears the N6-acetyllysine mark. Positions 224 and 318 each coordinate [4Fe-4S] cluster.

The protein belongs to the class-I fumarase family. As to quaternary structure, homodimer. [4Fe-4S] cluster serves as cofactor.

It catalyses the reaction (S)-malate = fumarate + H2O. The enzyme catalyses (S,S)-tartrate = oxaloacetate + H2O. Functionally, catalyzes the reversible hydration of fumarate to (S)-malate. Functions in the generation of fumarate for use as an anaerobic electron acceptor. To a lesser extent, also displays D-tartrate dehydratase activity, but is not able to convert (R)-malate, L-tartrate or meso-tartrate. Is required for anaerobic growth on D-tartrate. The polypeptide is Fumarate hydratase class I, anaerobic (Escherichia coli (strain K12)).